Here is an 835-residue protein sequence, read N- to C-terminus: Leucine--tRNA ligase (835 aa).

Positions 36–46 match the 'HIGH' region motif; the sequence is PYPSGKIHVGH. The short motif at 602–606 is the 'KMSKS' region element; the sequence is KMSKS. Lys-605 is an ATP binding site.

This sequence belongs to the class-I aminoacyl-tRNA synthetase family.

The protein localises to the cytoplasm. The catalysed reaction is tRNA(Leu) + L-leucine + ATP = L-leucyl-tRNA(Leu) + AMP + diphosphate. This Rickettsia felis (strain ATCC VR-1525 / URRWXCal2) (Rickettsia azadi) protein is Leucine--tRNA ligase.